Reading from the N-terminus, the 184-residue chain is Lactoylglutathione lyase (184 aa).

An N-acetylalanine modification is found at A2. A disulfide bridge connects residues C19 and C20. Positions 31–177 constitute a VOC domain; it reads LLQQTMLRIK…DGYWIEILNP (147 aa). Substrate-binding residues include Q34 and R38. Q34 contacts Zn(2+). Position 88 is an N6-succinyllysine (K88). Position 100 (E100) interacts with Zn(2+). N104 lines the substrate pocket. Position 107 is a phosphothreonine (T107). R123 and H127 together coordinate substrate. Residue H127 coordinates Zn(2+). An S-glutathionyl cysteine modification is found at C139. The residue at position 148 (K148) is an N6-acetyllysine; alternate. N6-succinyllysine; alternate is present on K148. 157–158 provides a ligand contact to substrate; it reads KM. E173 contributes to the Zn(2+) binding site. E173 functions as the Proton donor/acceptor in the catalytic mechanism.

The protein belongs to the glyoxalase I family. Homodimer. Zn(2+) is required as a cofactor. In terms of processing, glutathionylation at Cys-139 inhibits enzyme activity. Phosphorylated at Thr-107 in the presence of CaMK2. However, this is a consensus site for phosphorylation by CK2 so phosphorylation may be mediated by CK2 rather than CaMK2. Phosphorylation is induced by TNF and suppresses the TNF-induced transcriptional activity of NF-kappa-B. Post-translationally, exists in a nitric oxide (NO)-modified form. The exact nature of the modification is unknown, but it suppresses the TNF-induced transcriptional activity of NF-kappa-B.

It carries out the reaction (R)-S-lactoylglutathione = methylglyoxal + glutathione. It functions in the pathway secondary metabolite metabolism; methylglyoxal degradation; (R)-lactate from methylglyoxal: step 1/2. With respect to regulation, subject to competitive inhibition by methyl-gerfelin. Its function is as follows. Catalyzes the conversion of hemimercaptal, formed from methylglyoxal and glutathione, to S-lactoylglutathione. Involved in the regulation of TNF-induced transcriptional activity of NF-kappa-B. Required for normal osteoclastogenesis. This Mus musculus (Mouse) protein is Lactoylglutathione lyase (Glo1).